The primary structure comprises 313 residues: Olfactory receptor 4E2 (313 aa).

Topologically, residues 1–25 (MDSLNQTRVTEFVFLGLTDNRVLEM) are extracellular. Asn5 carries N-linked (GlcNAc...) asparagine glycosylation. The helical transmembrane segment at 26–49 (LFFMAFSAIYMLTLSGNILIIIAT) threads the bilayer. Topologically, residues 50-57 (VFTPSLHT) are cytoplasmic. Residues 58–79 (PMYFFLSNLSFIDICHSSVTVP) form a helical membrane-spanning segment. The Extracellular portion of the chain corresponds to 80–100 (KMLEGLLLERKTISFDNCITQ). A disulfide bridge links Cys97 with Cys179. The chain crosses the membrane as a helical span at residues 101–120 (LFFLHLFACAEIFLLIIVAY). 2 residues coordinate Cu cation: His105 and Cys109. At 121 to 139 (DRYVAICTPLHYPNVMNMR) the chain is on the cytoplasmic side. A helical membrane pass occupies residues 140-158 (VCIQLVFALWLGGTVHSLG). Residues 159 to 195 (QTFLTIRLPYCGPNIIDSYFCDVPLVIKLACTDTYLT) lie on the Extracellular side of the membrane. Residues 196–219 (GILIVTNSGTISLSCFLAVVTSYM) form a helical membrane-spanning segment. Topologically, residues 220–235 (VILVSLRKHSAEGRQK) are cytoplasmic. The chain crosses the membrane as a helical span at residues 236–258 (ALSTCSAHFMVVALFFGPCIFIY). Residues 259–269 (TRPDTSFSIDK) are Extracellular-facing. Arg260 lines the Cu cation pocket. A helical membrane pass occupies residues 270-289 (VVSVFYTVVTPLLNPFIYTL). Over 290–313 (RNEEVKSAMKQLRQRQVFFTKSYT) the chain is Cytoplasmic.

It belongs to the G-protein coupled receptor 1 family.

The protein localises to the cell membrane. Its activity is regulated as follows. Copper binding enhances receptor activity in response to odorant binding. Its function is as follows. Olfactory receptor that is activated by the binding of organosulfur odorants with thioether groups such as (methylthio)methanethiol (MTMT) and bis(methylthiomethyl) disulfide. Also binds odorants cis-cyclooctene and tert-butyl mercaptan. The activity of this receptor is mediated by G proteins which activate adenylyl cyclase. This Homo sapiens (Human) protein is Olfactory receptor 4E2.